The following is a 673-amino-acid chain: Protein kinase ORF74 (673 aa).

The Protein kinase domain occupies 128 to 404 (TDTDEAVARG…ARELLVYPRY (277 aa)). D252 serves as the catalytic Proton acceptor. The interval 340 to 364 (MDNDALDSRRTGRDGDPVNPEGFGT) is disordered. Residues 345–355 (LDSRRTGRDGD) show a composition bias toward basic and acidic residues.

The protein belongs to the protein kinase superfamily. Ser/Thr protein kinase family.

It catalyses the reaction L-seryl-[protein] + ATP = O-phospho-L-seryl-[protein] + ADP + H(+). It carries out the reaction L-threonyl-[protein] + ATP = O-phospho-L-threonyl-[protein] + ADP + H(+). This is Protein kinase ORF74 (ORF74) from Ictalurid herpesvirus 1 (strain Auburn) (IcHV-1).